We begin with the raw amino-acid sequence, 156 residues long: ATP synthase subunit b (156 aa).

Residues 3–23 traverse the membrane as a helical segment; sequence INFTLLAQALAFAGLIWIIAT.

It belongs to the ATPase B chain family. F-type ATPases have 2 components, F(1) - the catalytic core - and F(0) - the membrane proton channel. F(1) has five subunits: alpha(3), beta(3), gamma(1), delta(1), epsilon(1). F(0) has three main subunits: a(1), b(2) and c(10-14). The alpha and beta chains form an alternating ring which encloses part of the gamma chain. F(1) is attached to F(0) by a central stalk formed by the gamma and epsilon chains, while a peripheral stalk is formed by the delta and b chains.

The protein localises to the cell inner membrane. In terms of biological role, f(1)F(0) ATP synthase produces ATP from ADP in the presence of a proton or sodium gradient. F-type ATPases consist of two structural domains, F(1) containing the extramembraneous catalytic core and F(0) containing the membrane proton channel, linked together by a central stalk and a peripheral stalk. During catalysis, ATP synthesis in the catalytic domain of F(1) is coupled via a rotary mechanism of the central stalk subunits to proton translocation. Its function is as follows. Component of the F(0) channel, it forms part of the peripheral stalk, linking F(1) to F(0). This chain is ATP synthase subunit b, found in Stenotrophomonas maltophilia (strain R551-3).